Consider the following 129-residue polypeptide: Small ribosomal subunit protein uS11 (129 aa).

This sequence belongs to the universal ribosomal protein uS11 family. In terms of assembly, part of the 30S ribosomal subunit. Interacts with proteins S7 and S18. Binds to IF-3.

Located on the platform of the 30S subunit, it bridges several disparate RNA helices of the 16S rRNA. Forms part of the Shine-Dalgarno cleft in the 70S ribosome. This is Small ribosomal subunit protein uS11 from Pseudomonas entomophila (strain L48).